A 278-amino-acid polypeptide reads, in one-letter code: Probable ribosomal RNA small subunit methyltransferase A (278 aa).

Positions 23, 25, 50, 71, 95, and 110 each coordinate S-adenosyl-L-methionine.

It belongs to the class I-like SAM-binding methyltransferase superfamily. rRNA adenine N(6)-methyltransferase family. RsmA subfamily.

The protein resides in the cytoplasm. Specifically dimethylates two adjacent adenosines in the loop of a conserved hairpin near the 3'-end of 16S rRNA in the 30S particle. May play a critical role in biogenesis of 30S subunits. The sequence is that of Probable ribosomal RNA small subunit methyltransferase A from Thermococcus gammatolerans (strain DSM 15229 / JCM 11827 / EJ3).